The sequence spans 395 residues: Protein maternal effect lethal 26 (395 aa).

The MATH domain maps to 41–162; sequence KVQHTWTVKN…RDMIIVNVEI (122 aa). The 69-residue stretch at 201-269 folds into the BTB domain; that stretch reads CDFAINVNGK…IYCGRCNKDI (69 aa).

In terms of assembly, interacts (via BTB domain) with cul-3. Seems to be a component of a E3 ubiquitin-protein ligase complex containing cul-3. Interacts (probably via MATH domain) with mei-1, which targets mei-1 for ubiquitin-mediated proteolysis. Interacts (probably via MATH domain) with ppfr-1, the regulatory subunit of the PP4 complex; targets ppfr-1 for ubiquitin-mediated proteolysis. May interact (via MATH domain) with unc-89 (via Ig-like C2-type domain 2/3 and, Ig-like C2-type domain 50 and fibronectin type-III domain 2). In terms of tissue distribution, expressed in body wall muscles.

The protein localises to the cytoplasm. It localises to the myofibril. The protein resides in the sarcomere. Its subcellular location is the m line. It is found in the i band. The protein operates within protein modification; protein ubiquitination. Functionally, probable substrate-specific adapter of an E3 ubiquitin-protein ligase complex which mediates the ubiquitination and subsequent proteasomal degradation of target proteins. Controls degradation of microtubule severing protein mei-1 after meiosis. Controls degradation of ppfr-1, the regulatory subunit of PP4 complex, after meiosis. In body wall muscles, involved in the organization of myosin thick filaments, likely by regulating the degradation of mei-1 downstream of unc-89. May also activate the TORC1 pathway. The protein is Protein maternal effect lethal 26 (mel-26) of Caenorhabditis elegans.